Reading from the N-terminus, the 528-residue chain is PH domain-containing protein DDB_G0267786 (528 aa).

In terms of domain architecture, PH spans 59 to 180 (SDVFSGYLVK…WIEIFKTCCR (122 aa)).

This chain is PH domain-containing protein DDB_G0267786, found in Dictyostelium discoideum (Social amoeba).